The primary structure comprises 1127 residues: MTSLYGRHAEKTTDMPKPSAPKVHVQRSVSRDTIAIHFSASGEEEEEEEEEFREYFEEGLDDQSIVTGLEAKEDLYLEPQVGHDPAGPAASPVLADGLSVSQAPAILPVSKNTVKLLESPVPAAQVLSTVPLAVSPGSSSSGPLASSPSVSSLSEQKTSSSSPLSSPSKSPILSSSASTSTLSSAKPFMSLVKSLSTEVEPKESPHPARHRHLMKTLVKSLSTDTSRQESDTVSYKPPDSKLNLHLFKQFTQPRNTGGDSKTAPSSPLTSPSDTRSFFKVPEMEAKIEDTKRRLSEVIYEPFQLLSKIIGEESGSHRPKALSSSASELSNLSSLNGHLESNNNYSIKEEECDSEGDGYGSDSNIPRSDHPKSTGEPTREIELKSSQGSSLKDLGLKTSSLVLEKCSLSALVSKEDEEFCELYTEDFDLETEGESKVDKLSDIPLKPEVLAEDGVVLDSEDEVDSAVQHPELPVKTLGFFIMCVYVYLILPLPHYVSGLFLGIGLGFMTAVCVIWFFTPPSAHKYHKLHKNLRHWNTRSLDIKEPEILKGWMNEIYNYDPETYHATLTHSVFVRLEGGTLRLSKPNKNISRRASYNEPKPEVTYISQKIYDLSDSKIYLVPKTLARKRIWNKKYPICIELGQQDDFMSKAQTDKETSEEKPPAEGSEDPKKPPRPQEGTRSSQRDQILYLFGRTGREKEEWFRRFILASKLKSEIKKSSGVSGGKPGLLPAHSRHNSPSGHLTHSRSSSKGSVEEIMSQPKQKELAGSVRQKMLLDYSVYMGRCVPQESRSPQRSPLQSAESSPTAGKKLPEVPPSEEEEQEAWVNALLGRIFWDFLGEKYWSDLVSKKIQMKLSKIKLPYFMNELTLTELDMGVAVPKILQAFKPYVDHQGLWIDLEMSYNGSFLMTLETKMNLTKLGKEPLVEALKVGEIGKEGCRPRAFCLADSDEESSSAGSSEEDDAPEPSGGDKQLLPGAEGYVGGHRTSKIMRFVDKITKSKYFQKATETEFIKKKIEEVSNTPLLLTVEVQECRGTLAVNIPPPPTDRVWYGFRKPPHVELKARPKLGEREVTLVHVTDWIEKKLEQEFQKVFVMPNMDDVYITIMHSAMDPRSTSCLLKDPPVEAADQP.

2 disordered regions span residues 1 to 27 and 133 to 279; these read MTSL…HVQR and AVSP…SFFK. Residues 133–187 are compositionally biased toward low complexity; that stretch reads AVSPGSSSSGPLASSPSVSSLSEQKTSSSSPLSSPSKSPILSSSASTSTLSSAKP. Ser-196 is modified (phosphoserine). Residues 249 to 275 show a composition bias toward polar residues; sequence QFTQPRNTGGDSKTAPSSPLTSPSDTR. Phosphothreonine is present on Thr-262. A phosphoserine mark is found at Ser-265, Ser-266, Ser-270, and Ser-295. Asn-330 carries N-linked (GlcNAc...) asparagine glycosylation. The tract at residues 348–386 is disordered; that stretch reads EEECDSEGDGYGSDSNIPRSDHPKSTGEPTREIELKSSQ. Positions 366 to 382 are enriched in basic and acidic residues; it reads RSDHPKSTGEPTREIEL. The next 2 helical transmembrane spans lie at 475 to 495 and 497 to 517; these read TLGF…PHYV and GLFL…WFFT. Disordered stretches follow at residues 648 to 685, 715 to 764, 786 to 816, and 947 to 980; these read KAQT…QRDQ, KKSS…QKEL, QESR…PPSE, and DEES…GYVG. Residues 650–670 show a composition bias toward basic and acidic residues; the sequence is QTDKETSEEKPPAEGSEDPKK. Residues Ser-732, Ser-738, Ser-744, Ser-748, Ser-751, Ser-798, and Ser-815 each carry the phosphoserine modification. Residues 735–750 are compositionally biased toward polar residues; sequence NSPSGHLTHSRSSSKG. The span at 787–804 shows a compositional bias: polar residues; it reads ESRSPQRSPLQSAESSPT. The SMP-LTD domain maps to 816-1101; the sequence is EEEEQEAWVN…MPNMDDVYIT (286 aa). Positions 947-962 are enriched in acidic residues; sequence DEESSSAGSSEEDDAP.

The protein localises to the endoplasmic reticulum membrane. It is found in the nucleus membrane. Functionally, during endoplasmic reticulum (ER) stress or when cellular ceramide levels increase, may induce contacts between the ER and medial-Golgi complex to facilitate non-vesicular transport of ceramides from the ER to the Golgi complex where they are converted to complex sphingolipids, preventing toxic ceramide accumulation. The sequence is that of Testis-expressed protein 2 (TEX2) from Homo sapiens (Human).